Reading from the N-terminus, the 407-residue chain is E3 ubiquitin-protein ligase TRIM13 (407 aa).

The RING-type zinc-finger motif lies at 10–58; it reads CPICCSLFDDPRVLPCSHNFCKKCLEGILEGSVRNSLWRPAPFKCPTCR. The segment at 89–131 adopts a B box-type zinc-finger fold; the sequence is PKMPVCKGHLGQPLNIFCLTDMQLICGICATRGEHTKHVFCSI. Zn(2+)-binding residues include Cys-94, His-97, Cys-117, and His-123. Positions 172–200 form a coiled coil; sequence LQLLTKDSDKVKEFFEKLQHTLDQKKNEI. A helical membrane pass occupies residues 317–337; it reads LFLLILLLGLVIVFGPTMFLE.

It belongs to the TRIM/RBCC family. Interacts (via C-terminal domain) with VCP. Interacts with AKT1; the interaction ubiquitinates AKT1 and leads to its proteasomal degradation. Interacts with MDM2; the interaction ubiquitinates AKT1 and leads to its proteasomal degradation. Interacts with p62/SQSTM1. Interacts with TRAF6. Interacts with IKBKG/NEMO. Auto-ubiquitinated; requires the RING-type zinc finger. Auto-polyubiquitination leads to proteasomal degradation.

The protein resides in the endoplasmic reticulum membrane. The enzyme catalyses S-ubiquitinyl-[E2 ubiquitin-conjugating enzyme]-L-cysteine + [acceptor protein]-L-lysine = [E2 ubiquitin-conjugating enzyme]-L-cysteine + N(6)-ubiquitinyl-[acceptor protein]-L-lysine.. The protein operates within protein modification; protein ubiquitination. Functionally, endoplasmic reticulum (ER) membrane anchored E3 ligase involved in the retrotranslocation and turnover of membrane and secretory proteins from the ER through a set of processes named ER-associated degradation (ERAD). This process acts on misfolded proteins as well as in the regulated degradation of correctly folded proteins. Enhances ionizing radiation-induced p53/TP53 stability and apoptosis via ubiquitinating MDM2 and AKT1 and decreasing AKT1 kinase activity through MDM2 and AKT1 proteasomal degradation. Regulates ER stress-induced autophagy, and may act as a tumor suppressor. Also plays a role in innate immune response by stimulating NF-kappa-B activity in the TLR2 signaling pathway. Ubiquitinates TRAF6 via the 'Lys-29'-linked polyubiquitination chain resulting in NF-kappa-B activation. Participates as well in T-cell receptor-mediated NF-kappa-B activation. In the presence of TNF, modulates the IKK complex by regulating IKBKG/NEMO ubiquitination leading to the repression of NF-kappa-B. This Homo sapiens (Human) protein is E3 ubiquitin-protein ligase TRIM13 (TRIM13).